Here is a 537-residue protein sequence, read N- to C-terminus: Sodium/hydrogen exchanger 9B2 (537 aa).

Over residues 1–10 (MGDEDKRITY) the composition is skewed to basic and acidic residues. Positions 1–33 (MGDEDKRITYEDSEPSTGMNYTPSMHQETQEET) are disordered. The Cytoplasmic portion of the chain corresponds to 1–86 (MGDEDKRITY…ACPPHGLLDR (86 aa)). Positions 15–27 (PSTGMNYTPSMHQ) are enriched in polar residues. Ser-49 carries the phosphoserine modification. A helical membrane pass occupies residues 87–104 (VVTNVTIIVLLWAVIWSI). The Extracellular portion of the chain corresponds to 105–113 (TGSECLPGG). A helical membrane pass occupies residues 114–133 (NLFGIIILFYCAIIGGKLLG). The Cytoplasmic segment spans residues 134–144 (LIKLPTLPPLP). A helical transmembrane segment spans residues 145-161 (SLLGMLLAGFLIRNIPV). Topologically, residues 162–171 (INDNVQIKHK) are extracellular. The helical transmembrane segment at 172–189 (WSSSLRSIALSIILVRAG) threads the bilayer. The Cytoplasmic portion of the chain corresponds to 190-200 (LGLDSKALKKL). A helical membrane pass occupies residues 201 to 227 (KGVCVRLSMGPCIVEACTSALLAHYLL). The Extracellular portion of the chain corresponds to 228–233 (GLPWQW). Residues 234-242 (GFILGFVLG) form a helical membrane-spanning segment. Topologically, residues 243 to 270 (AVSPAVVVPSMLLLQGGGYGVEKGVPTL) are cytoplasmic. 4 residues coordinate Na(+): Val-244, Gly-275, Asp-278, and Asp-279. A helical membrane pass occupies residues 271–290 (LMAAGSFDDILAITGFNTCL). The Extracellular portion of the chain corresponds to 291–300 (GIAFSTGSTV). The helical transmembrane segment at 301–324 (FNVLRGVLEVVIGVATGSVLGFFI) threads the bilayer. Residues 325 to 339 (QYFPSCDQDKLVCKR) lie on the Cytoplasmic side of the membrane. A helical membrane pass occupies residues 340–357 (TFLVLGLSVLAVFSSVHF). Topologically, residues 358-361 (GFPG) are extracellular. A helical membrane pass occupies residues 362 to 373 (SGGLCTLVMAFL). Over 374–390 (AGMGWTSEKAEVEKIIA) the chain is Cytoplasmic. Residues 391 to 411 (VAWDIFQPLLFGLIGAEVSIA) form a helical membrane-spanning segment. The Extracellular segment spans residues 412-417 (SLRPET). The chain crosses the membrane as a helical span at residues 418–440 (VGLCVATVGIAVLIRILTTFLMV). Residues 441–461 (CFAGFNLKEKIFISFAWLPKA) are Cytoplasmic-facing. A helical membrane pass occupies residues 462–473 (TVQAAIGSVALD). At 474–486 (TARSHGEKQLEDY) the chain is on the extracellular side. A helical membrane pass occupies residues 487 to 509 (GMDVLTVAFLSILITAPIGSLLI). Residues 510–537 (GLLGPRLLQKVEHQNKDEEVQGETSVQV) lie on the Cytoplasmic side of the membrane.

This sequence belongs to the monovalent cation:proton antiporter 1 (CPA1) transporter (TC 2.A.36) family. In terms of assembly, homodimer; dimerization is essential for SLC9B2 activity. Lipids seem to play a role in the stabilization of the dimerization subdomain.

Its subcellular location is the cell membrane. It localises to the mitochondrion membrane. The protein resides in the endosome membrane. It is found in the recycling endosome membrane. The protein localises to the cytoplasmic vesicle. Its subcellular location is the secretory vesicle. It localises to the synaptic vesicle membrane. The protein resides in the basolateral cell membrane. It is found in the apical cell membrane. It catalyses the reaction Li(+)(out) + H(+)(in) = Li(+)(in) + H(+)(out). The enzyme catalyses Li(+)(in) + Na(+)(out) = Li(+)(out) + Na(+)(in). It carries out the reaction Na(+)(in) + H(+)(out) = Na(+)(out) + H(+)(in). With respect to regulation, allosterically inhibited by the N-terminal domain. Inhibited by phloretin. Its function is as follows. Electroneutral Na(+) Li(+)/H(+) antiporter that extrudes Na(+) or Li(+) in exchange for external protons across the membrane. Uses the proton gradient/membrane potential to extrude sodium. Contributes to the regulation of intracellular pH and sodium homeostasis. Also able to mediate Na(+)/Li(+) antiporter activity in kidney. May play a physiological role in renal tubular function and blood pressure homeostasis. Plays an important role for insulin secretion and clathrin-mediated endocytosis in beta-cells. Involved in sperm motility and fertility. It is controversial whether SLC9B2 plays a role in osteoclast differentiation or not. The sequence is that of Sodium/hydrogen exchanger 9B2 (SLC9B2) from Pongo abelii (Sumatran orangutan).